The sequence spans 137 residues: Structural protein A137R (137 aa).

The protein belongs to the asfivirus A137R family. In terms of assembly, interacts with host TBK1.

The protein resides in the virion. It is found in the host cytoplasm. Its function is as follows. Plays a role in the inhibition of the host innate immune response. Mechanistically, promotes the autophagy-mediated lysosomal degradation of host TBK1 and affects IRF3 nuclear translocation to block type I IFN production. The sequence is that of Structural protein A137R from Ornithodoros (relapsing fever ticks).